Here is a 253-residue protein sequence, read N- to C-terminus: Ribonuclease HII (253 aa).

An RNase H type-2 domain is found at 32 to 223 (APVAGLDEAG…FKTSGEEDRI (192 aa)). Positions 38, 39, and 130 each coordinate a divalent metal cation.

It belongs to the RNase HII family. The cofactor is Mn(2+). Requires Mg(2+) as cofactor.

The protein resides in the cytoplasm. It catalyses the reaction Endonucleolytic cleavage to 5'-phosphomonoester.. Its function is as follows. Endonuclease that specifically degrades the RNA of RNA-DNA hybrids. The chain is Ribonuclease HII from Chelativorans sp. (strain BNC1).